We begin with the raw amino-acid sequence, 148 residues long: Endoribonuclease YbeY (148 aa).

Zn(2+)-binding residues include His102, His106, and His112.

It belongs to the endoribonuclease YbeY family. Zn(2+) serves as cofactor.

Its subcellular location is the cytoplasm. In terms of biological role, single strand-specific metallo-endoribonuclease involved in late-stage 70S ribosome quality control and in maturation of the 3' terminus of the 16S rRNA. This Phytoplasma mali (strain AT) protein is Endoribonuclease YbeY.